A 99-amino-acid polypeptide reads, in one-letter code: Protein translation factor SUI1 homolog (99 aa).

It belongs to the SUI1 family.

This is Protein translation factor SUI1 homolog from Sulfolobus acidocaldarius (strain ATCC 33909 / DSM 639 / JCM 8929 / NBRC 15157 / NCIMB 11770).